Reading from the N-terminus, the 369-residue chain is MFAPLQNDTFLRACLRQATDHTPVWLMRQAGRYLPEYKATRAKAGSFMGLATNTDYATEVTLQPLERYPLDAAILFSDILTVPDAMGLGLSFALGEGPRFATPVRDEAAVNKLEVPDMNKLRYVFDAVTSIRKALGGRVPLIGFSGSPWTLACYMVEGSGSDDYRLVKTMLYQRPDLMHKMLAINADAVALYLNAQIEAGAQAVMIFDSWGGVLADAAFHTFSLAYTARVLSQLKREHKGVTIPRLVFTKGGGQWLESMKQLDCEVLGLDWTVNLAKARALVGENGPNAKALQGNLDPNVLFANPAQIEAEVAAVLNSFGAPHTDLTQTGPTQIFNLGHGISQHTPPESVEVLVRAVHAHSRSLRKQQG.

Residues 28–32 (RQAGR), Asp78, Tyr154, Ser209, and His339 each bind substrate.

Belongs to the uroporphyrinogen decarboxylase family. As to quaternary structure, homodimer.

It localises to the cytoplasm. The catalysed reaction is uroporphyrinogen III + 4 H(+) = coproporphyrinogen III + 4 CO2. It participates in porphyrin-containing compound metabolism; protoporphyrin-IX biosynthesis; coproporphyrinogen-III from 5-aminolevulinate: step 4/4. Its function is as follows. Catalyzes the decarboxylation of four acetate groups of uroporphyrinogen-III to yield coproporphyrinogen-III. This is Uroporphyrinogen decarboxylase from Polaromonas naphthalenivorans (strain CJ2).